Reading from the N-terminus, the 248-residue chain is 3-deoxy-manno-octulosonate cytidylyltransferase (248 aa).

The protein belongs to the KdsB family.

Its subcellular location is the cytoplasm. The enzyme catalyses 3-deoxy-alpha-D-manno-oct-2-ulosonate + CTP = CMP-3-deoxy-beta-D-manno-octulosonate + diphosphate. The protein operates within nucleotide-sugar biosynthesis; CMP-3-deoxy-D-manno-octulosonate biosynthesis; CMP-3-deoxy-D-manno-octulosonate from 3-deoxy-D-manno-octulosonate and CTP: step 1/1. Its pathway is bacterial outer membrane biogenesis; lipopolysaccharide biosynthesis. In terms of biological role, activates KDO (a required 8-carbon sugar) for incorporation into bacterial lipopolysaccharide in Gram-negative bacteria. This is 3-deoxy-manno-octulosonate cytidylyltransferase from Chlorobium chlorochromatii (strain CaD3).